We begin with the raw amino-acid sequence, 137 residues long: Large ribosomal subunit protein uL16 (137 aa).

It belongs to the universal ribosomal protein uL16 family. In terms of assembly, part of the 50S ribosomal subunit.

Binds 23S rRNA and is also seen to make contacts with the A and possibly P site tRNAs. This chain is Large ribosomal subunit protein uL16, found in Mycoplasma mycoides subsp. mycoides SC (strain CCUG 32753 / NCTC 10114 / PG1).